Consider the following 37-residue polypeptide: Photosystem II reaction center protein Psb30 (37 aa).

A helical membrane pass occupies residues 10 to 30 (LISLLLLTLIMLAGPAVIALW).

This sequence belongs to the Psb30/Ycf12 family. PSII is composed of 1 copy each of membrane proteins PsbA, PsbB, PsbC, PsbD, PsbE, PsbF, PsbH, PsbI, PsbJ, PsbK, PsbL, PsbM, PsbT, PsbX, Psb30/Ycf12, peripheral proteins PsbO, CyanoQ (PsbQ), PsbU, PsbV and a large number of cofactors. It forms dimeric complexes.

The protein resides in the cell inner membrane. A core subunit of photosystem II (PSII), probably helps stabilize the reaction center. This chain is Photosystem II reaction center protein Psb30, found in Gloeobacter violaceus (strain ATCC 29082 / PCC 7421).